The chain runs to 358 residues: MRVMNFSAGPSNLPDEVLKEAQEHLYDYHGKGFSIMEVSHRGKVFEEVHFEAIKMAKELYGVNDDYEVLLMQGGASLQFAMIPMNLYMGGVCEFANTGVWTKKAIKEAEILGVNTKIVASSQESEFDHIPQFEFSDNADYAYICSNNTIYGTQYKCYPKTKSPLIIDASSDFFSKKIDFSNIAMLFGGVQKNAGISGLACAFVRKDMIERSKNKNIPSMLKYSIYAENDSLFNTPATFAIYMFNLEMKWLLNQGGLDKINEQNIQKAKILYDVIDESNGFYKGHAKKENRSLMNVSFNIAHDKNLEPVFVKEAEENGMIGLKGHKILGGIRASIYNSISIEKVQKLSEFMKNFAKKHA.

Residue R41 coordinates L-glutamate. Pyridoxal 5'-phosphate-binding positions include 75–76 (AS), W100, T148, D167, and Q190. Position 191 is an N6-(pyridoxal phosphate)lysine (K191). 233 to 234 (NT) lines the pyridoxal 5'-phosphate pocket.

This sequence belongs to the class-V pyridoxal-phosphate-dependent aminotransferase family. SerC subfamily. Homodimer. Pyridoxal 5'-phosphate serves as cofactor.

It is found in the cytoplasm. It catalyses the reaction O-phospho-L-serine + 2-oxoglutarate = 3-phosphooxypyruvate + L-glutamate. The enzyme catalyses 4-(phosphooxy)-L-threonine + 2-oxoglutarate = (R)-3-hydroxy-2-oxo-4-phosphooxybutanoate + L-glutamate. Its pathway is amino-acid biosynthesis; L-serine biosynthesis; L-serine from 3-phospho-D-glycerate: step 2/3. It participates in cofactor biosynthesis; pyridoxine 5'-phosphate biosynthesis; pyridoxine 5'-phosphate from D-erythrose 4-phosphate: step 3/5. In terms of biological role, catalyzes the reversible conversion of 3-phosphohydroxypyruvate to phosphoserine and of 3-hydroxy-2-oxo-4-phosphonooxybutanoate to phosphohydroxythreonine. This is Phosphoserine aminotransferase from Campylobacter lari (strain RM2100 / D67 / ATCC BAA-1060).